A 353-amino-acid polypeptide reads, in one-letter code: Nicotinate-nucleotide--dimethylbenzimidazole phosphoribosyltransferase (353 aa).

The active-site Proton acceptor is the glutamate 320.

This sequence belongs to the CobT family.

It catalyses the reaction 5,6-dimethylbenzimidazole + nicotinate beta-D-ribonucleotide = alpha-ribazole 5'-phosphate + nicotinate + H(+). Its pathway is nucleoside biosynthesis; alpha-ribazole biosynthesis; alpha-ribazole from 5,6-dimethylbenzimidazole: step 1/2. Its function is as follows. Catalyzes the synthesis of alpha-ribazole-5'-phosphate from nicotinate mononucleotide (NAMN) and 5,6-dimethylbenzimidazole (DMB). This chain is Nicotinate-nucleotide--dimethylbenzimidazole phosphoribosyltransferase, found in Pseudoalteromonas translucida (strain TAC 125).